The sequence spans 165 residues: Nucleotide-binding protein RoseRS_0530 (165 aa).

This sequence belongs to the YajQ family.

Nucleotide-binding protein. The sequence is that of Nucleotide-binding protein RoseRS_0530 from Roseiflexus sp. (strain RS-1).